A 147-amino-acid polypeptide reads, in one-letter code: UPF0735 ACT domain-containing protein GTNG_2535 (147 aa).

In terms of domain architecture, ACT spans 69–144 (TLFFHLEDRS…FVEKVEIVGS (76 aa)).

The protein belongs to the UPF0735 family.

This chain is UPF0735 ACT domain-containing protein GTNG_2535, found in Geobacillus thermodenitrificans (strain NG80-2).